Here is a 248-residue protein sequence, read N- to C-terminus: Triosephosphate isomerase (248 aa).

9 to 11 (NWK) contacts substrate. His92 (electrophile) is an active-site residue. The active-site Proton acceptor is Glu164. Residues Gly170, Ser209, and 230–231 (GG) contribute to the substrate site.

It belongs to the triosephosphate isomerase family. In terms of assembly, homodimer.

The protein resides in the cytoplasm. The catalysed reaction is D-glyceraldehyde 3-phosphate = dihydroxyacetone phosphate. It participates in carbohydrate biosynthesis; gluconeogenesis. It functions in the pathway carbohydrate degradation; glycolysis; D-glyceraldehyde 3-phosphate from glycerone phosphate: step 1/1. Functionally, involved in the gluconeogenesis. Catalyzes stereospecifically the conversion of dihydroxyacetone phosphate (DHAP) to D-glyceraldehyde-3-phosphate (G3P). The polypeptide is Triosephosphate isomerase (Thiobacillus denitrificans (strain ATCC 25259 / T1)).